Reading from the N-terminus, the 590-residue chain is L-gulonolactone oxidase 5 (590 aa).

The first 31 residues, 1–31, serve as a signal peptide directing secretion; sequence MAFGYSPSYCSFWRTLLGLYCLFTLVHTVIS. Positions 60–242 constitute an FAD-binding PCMH-type domain; it reads STCRAANVAY…SQVTFELQPM (183 aa).

The protein belongs to the oxygen-dependent FAD-linked oxidoreductase family. FAD is required as a cofactor.

The enzyme catalyses L-gulono-1,4-lactone + O2 = L-ascorbate + H2O2 + H(+). It participates in cofactor biosynthesis; L-ascorbate biosynthesis. Functionally, catalyzes the oxidation of L-gulono-1,4-lactone to ascorbic acid. L-gulono-1,4-lactone is oxidized to hydrogen peroxide and L-xylo-hexulonolactone which spontaneously isomerizes to L-ascorbate. This chain is L-gulonolactone oxidase 5, found in Arabidopsis thaliana (Mouse-ear cress).